We begin with the raw amino-acid sequence, 1056 residues long: Isoleucine--tRNA ligase (1056 aa).

The 'HIGH' region signature appears at 56–66 (PFATGLPHYGH). The short motif at 603 to 607 (KMSKS) is the 'KMSKS' region element. Lys606 is a binding site for ATP.

This sequence belongs to the class-I aminoacyl-tRNA synthetase family. IleS type 2 subfamily. Monomer. Requires Zn(2+) as cofactor.

Its subcellular location is the cytoplasm. The enzyme catalyses tRNA(Ile) + L-isoleucine + ATP = L-isoleucyl-tRNA(Ile) + AMP + diphosphate. Catalyzes the attachment of isoleucine to tRNA(Ile). As IleRS can inadvertently accommodate and process structurally similar amino acids such as valine, to avoid such errors it has two additional distinct tRNA(Ile)-dependent editing activities. One activity is designated as 'pretransfer' editing and involves the hydrolysis of activated Val-AMP. The other activity is designated 'posttransfer' editing and involves deacylation of mischarged Val-tRNA(Ile). This Bdellovibrio bacteriovorus (strain ATCC 15356 / DSM 50701 / NCIMB 9529 / HD100) protein is Isoleucine--tRNA ligase.